Reading from the N-terminus, the 412-residue chain is Intraflagellar transport protein che-13 (412 aa).

2 disordered regions span residues 1 to 21 and 162 to 193; these read MEEE…GSAI and PPKE…NFLD. The span at 165-193 shows a compositional bias: acidic residues; it reads EEDEDTAVDEQDEDDDNDDIVEEPMNFLD. Residues 302 to 393 are a coiled coil; it reads QLASMMSKFR…VQIGVFEQSI (92 aa).

The protein belongs to the IFT57 family. In terms of assembly, component of the IFT complex B composed of at least che-2, che-13, dyf-1, dyf-3, dyf-6, dyf-11, dyf-13, ift-20, ift-74, ift-81, ifta-2, osm-1, osm-5 and osm-6.

The protein resides in the cytoplasm. Its subcellular location is the cytoskeleton. The protein localises to the cilium axoneme. Functionally, component of the intraflagellar transport (IFT) complex B required for transport of proteins in the motile cilium. May be required for ciliary entrance and transport of specific ciliary cargo proteins such as che-3 which are related to motility. Required for the formation of chemosensory cilia that detect chemosensory cues. The protein is Intraflagellar transport protein che-13 of Caenorhabditis elegans.